The chain runs to 208 residues: Small ribosomal subunit protein uS5 (208 aa).

Residues 1–15 show a composition bias toward polar residues; it reads MTDSNNQSPNKKTSG. The interval 1–54 is disordered; sequence MTDSNNQSPNKKTSGSSSAPPAADGRQENRRSRGEKRGGRRDRRGQERDSEWQE. Basic and acidic residues-rich tracts occupy residues 25 to 37 and 44 to 54; these read GRQE…GEKR and RGQERDSEWQE. The S5 DRBM domain maps to 52 to 115; sequence WQERVVQIRR…ADGKKHLVRV (64 aa).

The protein belongs to the universal ribosomal protein uS5 family. Part of the 30S ribosomal subunit. Contacts proteins S4 and S8.

Functionally, with S4 and S12 plays an important role in translational accuracy. In terms of biological role, located at the back of the 30S subunit body where it stabilizes the conformation of the head with respect to the body. This chain is Small ribosomal subunit protein uS5, found in Prochlorococcus marinus (strain NATL2A).